Consider the following 430-residue polypeptide: Adenylosuccinate synthetase (430 aa).

GTP is bound by residues 17 to 23 and 45 to 47; these read GDEGKGK and GHT. Asp18 functions as the Proton acceptor in the catalytic mechanism. Mg(2+)-binding residues include Asp18 and Gly45. IMP is bound by residues 18–21, 43–46, Thr139, Arg153, Asn229, Thr244, and Arg308; these read DEGK and NAGH. His46 serves as the catalytic Proton donor. 304–310 contributes to the substrate binding site; that stretch reads TVTGRRR. Residues Arg310, 336–338, and 418–420 each bind GTP; these read KLD and GVG.

The protein belongs to the adenylosuccinate synthetase family. As to quaternary structure, homodimer. It depends on Mg(2+) as a cofactor.

It is found in the cytoplasm. The enzyme catalyses IMP + L-aspartate + GTP = N(6)-(1,2-dicarboxyethyl)-AMP + GDP + phosphate + 2 H(+). The protein operates within purine metabolism; AMP biosynthesis via de novo pathway; AMP from IMP: step 1/2. Functionally, plays an important role in the de novo pathway and in the salvage pathway of purine nucleotide biosynthesis. Catalyzes the first committed step in the biosynthesis of AMP from IMP. In Cryptococcus neoformans var. neoformans serotype D (strain JEC21 / ATCC MYA-565) (Filobasidiella neoformans), this protein is Adenylosuccinate synthetase.